Reading from the N-terminus, the 621-residue chain is Stimulated by retinoic acid gene 6 protein-like (621 aa).

The Extracellular segment spans residues 1–21 (MLAASTRTRQINITCDNPVDR). N12 carries an N-linked (GlcNAc...) asparagine glycan. The chain crosses the membrane as a helical span at residues 22–42 (EVFLHYSLIPSLCIILVLSFL). Residues 43–53 (QRREHRRQRDD) lie on the Cytoplasmic side of the membrane. A helical transmembrane segment spans residues 54 to 74 (TSYLLGNHFGIIVPLDFVGTF). The Extracellular portion of the chain corresponds to 75–110 (SNRWSYGAAFGATANKVMFLFSEGYQPLTVPQWAQA). Residues 111–131 (FVLFIGGMEVGLSYFPFFACL) form a helical membrane-spanning segment. The Cytoplasmic segment spans residues 132–137 (SSEFQL). A helical membrane pass occupies residues 138–158 (VSSILGFSYSLTWFVVTVLQI). The Extracellular segment spans residues 159 to 173 (SQCPHGQFLGRFETL). A helical membrane pass occupies residues 174-194 (VFYWPSLLCLGFLLGRFLHMF). Topologically, residues 195–258 (LKALPVHLGL…CFQFPSRMVG (64 aa)) are cytoplasmic. The chain crosses the membrane as a helical span at residues 259 to 279 (TLLLAFICLYLFIVIEFCVFL). The Extracellular portion of the chain corresponds to 280–321 (HVRDKLDMFEDKLESYLTHMNETGTLTPIILQVKELISVTKG). Residues 322 to 342 (VWVVTILPAALTCVTYLFHIL) form a helical membrane-spanning segment. Residues 343–383 (ACYRKHMKRLWAGDKHFLPQKFHSPSSAASVVAIARYSGWQ) lie on the Cytoplasmic side of the membrane. Residues 384–404 (IAYILWGYLIIHVVQSLCGVM) traverse the membrane as a helical segment. At 405–424 (LMYGLVLPIIHHRGLEMLQG) the chain is on the extracellular side. The helical transmembrane segment at 425 to 445 (FGLGVLTLSIVVGLIILQVWI) threads the bilayer. Topologically, residues 446–476 (AGTFFLQPKLGTSDKQKPLALNNRRAFHNFN) are cytoplasmic. A helical membrane pass occupies residues 477-497 (YFLFFYNVLLGLGACLSRLLI). Over 498–621 (SCLLGTWLIA…TQILLTCSDC (124 aa)) the chain is Extracellular. At T612 the chain carries Phosphothreonine.

Glycosylated. As to expression, highly expressed in liver and small intestine. Also expressed in spleen, kidney, colon, stomach, placenta, adipose tissue and isolated adipocytes.

The protein localises to the cell membrane. Its function is as follows. Acts as a high-affinity cell-surface receptor for retinol-binding protein RBP4 and mediates RBP4-dependent retinol uptake in the liver. The protein is Stimulated by retinoic acid gene 6 protein-like of Mus musculus (Mouse).